The chain runs to 315 residues: N-acetylneuraminate lyase (315 aa).

Ser59 and Ser60 together coordinate aceneuramate. The active-site Proton donor is the Tyr149. Lys177 (schiff-base intermediate with substrate) is an active-site residue. Positions 179, 202, 204, 205, and 221 each coordinate aceneuramate.

This sequence belongs to the DapA family. NanA subfamily. In terms of assembly, homotetramer.

The protein localises to the cytoplasm. The catalysed reaction is aceneuramate = aldehydo-N-acetyl-D-mannosamine + pyruvate. It participates in amino-sugar metabolism; N-acetylneuraminate degradation; D-fructose 6-phosphate from N-acetylneuraminate: step 1/5. Functionally, catalyzes the reversible aldol cleavage of N-acetylneuraminic acid (sialic acid; Neu5Ac) to form pyruvate and N-acetylmannosamine (ManNAc) via a Schiff base intermediate. Cannot use 2,7-anhydro-Neu5Ac. Involved in the degradation of sialic acid, which is present in the host mucus layer and represents a much-coveted source of nutrients for R.gnavus, a prevalent member of the normal gut microbiota. The polypeptide is N-acetylneuraminate lyase (Mediterraneibacter gnavus (strain ATCC 29149 / DSM 114966 / JCM 6515 / VPI C7-9) (Ruminococcus gnavus)).